Here is a 211-residue protein sequence, read N- to C-terminus: Methylated-DNA--protein-cysteine methyltransferase (211 aa).

Residue Cys5 participates in Zn(2+) binding. Ser14 carries the phosphoserine modification. Zn(2+)-binding residues include Cys24 and His29. The segment at Ser35–Glu57 is disordered. His89 provides a ligand contact to Zn(2+). Residues Thr99, Tyr118, Gln119, Asn127, and Arg132 each contribute to the DNA site. Cys149 functions as the Nucleophile; methyl group acceptor in the catalytic mechanism. Ser155 is a binding site for DNA. The residue at position 205 (Ser205) is a Phosphoserine.

This sequence belongs to the MGMT family. It depends on Zn(2+) as a cofactor.

The protein localises to the nucleus. It carries out the reaction a 6-O-methyl-2'-deoxyguanosine in DNA + L-cysteinyl-[protein] = S-methyl-L-cysteinyl-[protein] + a 2'-deoxyguanosine in DNA. The enzyme catalyses a 4-O-methyl-thymidine in DNA + L-cysteinyl-[protein] = a thymidine in DNA + S-methyl-L-cysteinyl-[protein]. Its function is as follows. Involved in the cellular defense against the biological effects of O6-methylguanine (O6-MeG) and O4-methylthymine (O4-MeT) in DNA. Repairs the methylated nucleobase in DNA by stoichiometrically transferring the methyl group to a cysteine residue in the enzyme. This is a suicide reaction: the enzyme is irreversibly inactivated. This is Methylated-DNA--protein-cysteine methyltransferase (Mgmt) from Mus musculus (Mouse).